Consider the following 105-residue polypeptide: Protein METHYLENE BLUE SENSITIVITY 1 (105 aa).

The segment at 26-46 (RGGGKAGIADRTGKEKGGHAK) is disordered. A compositionally biased stretch (basic and acidic residues) spans 36 to 46 (RTGKEKGGHAK).

In terms of tissue distribution, mainly expressed in the epidermis.

It is found in the nucleus. The protein resides in the cytoplasm. It localises to the stress granule. Functionally, required for acclimation to reactive oxygen species (ROS) responses downstream of beta-cyclocitral (beta-cc) or mediated by dihydroactinidiolide, including singlet oxygen 1O(2) detoxification reactions, especially upon light-mediated photooxidative stress, and leading to programmed cell death. Prevents leaf senescence. Involved in cold acclimation. This Arabidopsis thaliana (Mouse-ear cress) protein is Protein METHYLENE BLUE SENSITIVITY 1.